The sequence spans 319 residues: uncharacterized protein (319 aa).

In terms of domain architecture, SIS spans 36 to 178 (IIEFLLSFKG…MTVIHEERGF (143 aa)). Residue 51–56 (GIGKSG) coordinates ATP. CBS domains are found at residues 203–263 (MRSG…HLKT) and 268–319 (MTKN…MGVS).

It belongs to the SIS family. GutQ/KpsF subfamily.

This is an uncharacterized protein from Rickettsia prowazekii (strain Madrid E).